Here is a 90-residue protein sequence, read N- to C-terminus: DNA/RNA-binding protein Alba (90 aa).

The residue at position 8 (K8) is an N6-acetyllysine.

This sequence belongs to the histone-like Alba family. Acetylated. Acetylation at Lys-8 decreases DNA-binding affinity.

The protein localises to the cytoplasm. It localises to the chromosome. Functionally, binds double-stranded DNA tightly but without sequence specificity. Involved in DNA compaction. The protein is DNA/RNA-binding protein Alba of Nanoarchaeum equitans (strain Kin4-M).